Reading from the N-terminus, the 79-residue chain is Kunitz-type serine protease inhibitor homolog dendrotoxin K (79 aa).

The region spanning 27–77 is the BPTI/Kunitz inhibitor domain; sequence CKLPLRIGPCKRKIPSFYYKWKAKQCLPFDYSGCGGNANRFKTIEECRRTC. 3 disulfides stabilise this stretch: cysteine 27–cysteine 77, cysteine 36–cysteine 60, and cysteine 52–cysteine 73.

It belongs to the venom Kunitz-type family. As to expression, expressed by the venom gland.

The protein resides in the secreted. Serine protease inhibitor homolog that selectively blocks voltage-gated potassium channels homooligomer Kv1.1/KCNA1 (EC(50)=0.6 nM) and Kv1.1-containing heterooligomer. This is Kunitz-type serine protease inhibitor homolog dendrotoxin K from Dendroaspis polylepis polylepis (Black mamba).